Reading from the N-terminus, the 503-residue chain is Ribonuclease Y (503 aa).

The helical transmembrane segment at 2–22 (GIIIGLIIVSVALIISLCSLL) threads the bilayer. Positions 193 to 253 (TTNLVKLPND…IRREIATKTL (61 aa)) constitute a KH domain. Residues 319-412 (VLLHSVEVAK…VAIADAISAS (94 aa)) form the HD domain.

It belongs to the RNase Y family.

The protein localises to the cell membrane. Its function is as follows. Endoribonuclease that initiates mRNA decay. The chain is Ribonuclease Y from Mesoplasma florum (strain ATCC 33453 / NBRC 100688 / NCTC 11704 / L1) (Acholeplasma florum).